The chain runs to 158 residues: Protein E6 (158 aa).

2 zinc fingers span residues 32-68 (CVYC…CHKC) and 105-141 (CLRC…CNTC). The short motif at 156 to 158 (TQV) is the PDZ-binding domain element.

The protein belongs to the papillomaviridae E6 protein family. In terms of assembly, forms homodimers. Interacts with ubiquitin-protein ligase UBE3A/E6-AP and thus forms a complex with human TP53. Interacts with human NFX1 and MAGI3. Interacts with human IRF3; this interaction inhibits the establishment of antiviral state. Interacts with human TYK2; this interaction inhibits JAK-STAT activation by interferon alpha. Interacts with host DLG1; this interaction leads to the proteasomal degradation of DLG1.

The protein resides in the host cytoplasm. It is found in the host nucleus. Its function is as follows. This protein has transforming activity in vitro. Plays a major role in the induction and maintenance of cellular transformation. Acts mainly as an oncoprotein by stimulating the destruction of many host cell key regulatory proteins. E6 associates with host UBE3A/E6-AP ubiquitin-protein ligase, and inactivates tumor suppressors TP53 and TP73 by targeting them to the 26S proteasome for degradation. In turn, DNA damage and chromosomal instabilities increase and lead to cell proliferation and cancer development. The complex E6/E6AP targets several other substrates to degradation via the proteasome including host DLG1 or NFX1, a repressor of human telomerase reverse transcriptase (hTERT). The resulting increased expression of hTERT prevents the shortening of telomere length leading to cell immortalization. Other cellular targets including BAK1, Fas-associated death domain-containing protein (FADD) and procaspase 8, are degraded by E6/E6AP causing inhibition of apoptosis. E6 also inhibits immune response by interacting with host IRF3 and TYK2. These interactions prevent IRF3 transcriptional activities and inhibit TYK2-mediated JAK-STAT activation by interferon alpha resulting in inhibition of the interferon signaling pathway. In Homo sapiens (Human), this protein is Protein E6.